A 249-amino-acid polypeptide reads, in one-letter code: Small ribosomal subunit protein uS2 (249 aa).

The protein belongs to the universal ribosomal protein uS2 family.

The sequence is that of Small ribosomal subunit protein uS2 from Bordetella avium (strain 197N).